Here is a 459-residue protein sequence, read N- to C-terminus: MSNRFAVILAAGKGTRMKSKLYKVLHPVCGKPMVQHVVDQVSQLGLQKLVTVVGHGAEKVQEQLGNVSEFALQAEQLGTAHAVDRAADILANEEGTTLVICGDTPLITAETMEALLKHHEEAGAKATVLTAYIEEPAGYGRIVRNENGHVEKIVEHKDANEVELTIKEINTGTYCFDNKALFASLSKVSNDNAQGEYYLPDVIEILKGEGHIVSAYQTEHFDETLGVNDRVALSQAEVIMKNRINHKNMVNGVTIIDPSNTYISADAIIGSDTVIHPGTIIEGKTVIGSDCEIGPHTVIRDSEIGDGTTIRQSTVHDSKIGTEVSVGPFAHIRPDSVIGNEVRVGNFVEIKKTVFGNGSKASHLSYIGDAQIGENVNLGCGSITVNYDGKNKFKTVIGDGVFIGCNSNLVAPVTVEDGAYVAAGSTITENVPSKALSIARARQVNKEDYVDQLLNKKKS.

Positions methionine 1–arginine 230 are pyrophosphorylase. Residues leucine 9 to glycine 12, lysine 23, glutamine 73, and glycine 78 to threonine 79 each bind UDP-N-acetyl-alpha-D-glucosamine. Mg(2+) is bound at residue aspartate 103. UDP-N-acetyl-alpha-D-glucosamine is bound by residues glycine 140, glutamate 155, asparagine 170, and asparagine 228. Position 228 (asparagine 228) interacts with Mg(2+). The segment at valine 231 to asparagine 251 is linker. The N-acetyltransferase stretch occupies residues glycine 252–serine 459. UDP-N-acetyl-alpha-D-glucosamine contacts are provided by arginine 333 and lysine 351. The active-site Proton acceptor is the histidine 363. Tyrosine 366 and asparagine 377 together coordinate UDP-N-acetyl-alpha-D-glucosamine. Acetyl-CoA is bound by residues asparagine 386–tyrosine 387, alanine 423, and arginine 440.

The protein in the N-terminal section; belongs to the N-acetylglucosamine-1-phosphate uridyltransferase family. In the C-terminal section; belongs to the transferase hexapeptide repeat family. As to quaternary structure, homotrimer. The cofactor is Mg(2+).

Its subcellular location is the cytoplasm. The enzyme catalyses alpha-D-glucosamine 1-phosphate + acetyl-CoA = N-acetyl-alpha-D-glucosamine 1-phosphate + CoA + H(+). It catalyses the reaction N-acetyl-alpha-D-glucosamine 1-phosphate + UTP + H(+) = UDP-N-acetyl-alpha-D-glucosamine + diphosphate. Its pathway is nucleotide-sugar biosynthesis; UDP-N-acetyl-alpha-D-glucosamine biosynthesis; N-acetyl-alpha-D-glucosamine 1-phosphate from alpha-D-glucosamine 6-phosphate (route II): step 2/2. It participates in nucleotide-sugar biosynthesis; UDP-N-acetyl-alpha-D-glucosamine biosynthesis; UDP-N-acetyl-alpha-D-glucosamine from N-acetyl-alpha-D-glucosamine 1-phosphate: step 1/1. It functions in the pathway bacterial outer membrane biogenesis; LPS lipid A biosynthesis. Functionally, catalyzes the last two sequential reactions in the de novo biosynthetic pathway for UDP-N-acetylglucosamine (UDP-GlcNAc). The C-terminal domain catalyzes the transfer of acetyl group from acetyl coenzyme A to glucosamine-1-phosphate (GlcN-1-P) to produce N-acetylglucosamine-1-phosphate (GlcNAc-1-P), which is converted into UDP-GlcNAc by the transfer of uridine 5-monophosphate (from uridine 5-triphosphate), a reaction catalyzed by the N-terminal domain. The protein is Bifunctional protein GlmU of Bacillus cytotoxicus (strain DSM 22905 / CIP 110041 / 391-98 / NVH 391-98).